A 263-amino-acid polypeptide reads, in one-letter code: Ribosomal RNA small subunit methyltransferase A (263 aa).

Isoleucine 18, glycine 43, glutamate 65, aspartate 91, and asparagine 110 together coordinate S-adenosyl-L-methionine.

The protein belongs to the class I-like SAM-binding methyltransferase superfamily. rRNA adenine N(6)-methyltransferase family. RsmA subfamily.

The protein localises to the cytoplasm. It catalyses the reaction adenosine(1518)/adenosine(1519) in 16S rRNA + 4 S-adenosyl-L-methionine = N(6)-dimethyladenosine(1518)/N(6)-dimethyladenosine(1519) in 16S rRNA + 4 S-adenosyl-L-homocysteine + 4 H(+). Functionally, specifically dimethylates two adjacent adenosines (A1518 and A1519) in the loop of a conserved hairpin near the 3'-end of 16S rRNA in the 30S particle. May play a critical role in biogenesis of 30S subunits. This Ehrlichia chaffeensis (strain ATCC CRL-10679 / Arkansas) protein is Ribosomal RNA small subunit methyltransferase A.